Here is a 551-residue protein sequence, read N- to C-terminus: Solute carrier family 22 member 3 (551 aa).

The helical transmembrane segment at 21-41 (VFLLLCLTGVTFAFLFVGVVF) threads the bilayer. N-linked (GlcNAc...) asparagine glycans are attached at residues asparagine 72, asparagine 99, and asparagine 114. A helical transmembrane segment spans residues 177-197 (LIVYLISCFGVGITGVVVAFA). Asparagine 199 carries an N-linked (GlcNAc...) asparagine glycan. The next 2 helical transmembrane spans lie at 236-256 (IVGI…PGIA) and 264-284 (GIQL…WVVP). A Proline-rich sequence motif is present at residues 284–288 (PESPR). Residue asparagine 317 is glycosylated (N-linked (GlcNAc...) asparagine). 3 helical membrane passes run 376–396 (MDFF…LLTI), 463–483 (FGVS…PFLL), and 493–513 (LPLI…MLLP).

Belongs to the major facilitator (TC 2.A.1) superfamily. Organic cation transporter (TC 2.A.1.19) family. In terms of tissue distribution, highly expressed in placenta. Expressed in intestine, hear, kidney and lung. Widely expressed in brain, particularly in hippocampus, cerebellum, cerebral cortex. In the brain, expressed predominantly in regions located at the brain-cerebrospinal fluid border, with expression extending to regions that belong to monoaminergic pathways such as raphe nuclei, striatum and thalamus. In brain, expressed in neurons and glial cells of amygdala. Expression is low in kidney and lung and undetectable in liver. Expressed in Sertoli cells in testis. Expressed in tracheal and bronchial epithelium of the respiratory tract, where it localizes to the apical membrane of ciliated and brush cells, and in basal cells.

The protein localises to the cell membrane. The protein resides in the apical cell membrane. It is found in the basolateral cell membrane. It localises to the mitochondrion membrane. Its subcellular location is the endomembrane system. The protein localises to the nucleus membrane. The protein resides in the nucleus outer membrane. It carries out the reaction (R)-noradrenaline(out) = (R)-noradrenaline(in). The enzyme catalyses (R)-adrenaline(out) = (R)-adrenaline(in). It catalyses the reaction serotonin(out) = serotonin(in). The catalysed reaction is dopamine(out) = dopamine(in). It carries out the reaction histamine(out) = histamine(in). The enzyme catalyses tyramine(in) = tyramine(out). It catalyses the reaction guanidine(out) = guanidine(in). The catalysed reaction is agmatine(out) = agmatine(in). It carries out the reaction spermidine(in) = spermidine(out). The enzyme catalyses L-histidyl-L-proline diketopiperazine(in) = L-histidyl-L-proline diketopiperazine(out). It catalyses the reaction (R)-salsolinol(in) = (R)-salsolinol(out). Functionally, electrogenic voltage-dependent transporter that mediates the transport of a variety of organic cations such as endogenous bioactive amines, cationic drugs and xenobiotics. Cation cellular uptake or release is driven by the electrochemical potential, i.e. membrane potential and concentration gradient. Functions as a Na(+)- and Cl(-)-independent, bidirectional uniporter. Implicated in neuronal monoamine neurotransmitters cellular uptake such as dopamine, adrenaline/epinephrine, noradrenaline/norepinephrine, histamine, serotonin and tyramine, thereby supporting a role in homeostatic regulation of aminergic neurotransmission in the brain. Transports dopaminergic neuromodulators cyclo(his-pro) and salsolinol with low efficiency. May be involved in the uptake and disposition of cationic compounds by renal clearance from the blood flow. May contribute to regulate the transport of cationic compounds in testis across the blood-testis-barrier. Mediates the transport of polyamine spermidine and putrescine. Mediates the bidirectional transport of polyamine agmatine. Also transports guanidine. May also mediate intracellular transport of organic cations, thereby playing a role in amine metabolism and intracellular signaling. This chain is Solute carrier family 22 member 3, found in Rattus norvegicus (Rat).